The primary structure comprises 377 residues: MAAAAQSRVVRVLSMSRSAITAIATSVCHGPPRRQLHHALIPHGKGGRSSVSGIVATVFGATGFLGRYVVNHLGRMGSQVIIPYRCDTYDIMHLRPMGDLGQLLFLEWDARDKDSIRRVVQHSNVVINLIGRDWETRNFDFEDVFVKIPQAIAQLSKEAGVEKFIHVSHLNANIKSSSRYLRNKAVGEKVVRDAFPEAIIIKPSDIFGREDRFLNSFASMHRFGPTPLGSLGWKTVKQPVYVVDVSKGIVNAVKDPDANGKSFAFVGPNRYLLFHLVKYIFAVAHRLFLPFPLPLFAYRWVARVFEISPFEPWITRDKVERMHITDMKLPHLPGLEDLGIQATPLELKAIEVLRRHRTYRWLSAEIEDVKPAKTVNI.

The transit peptide at 1–35 directs the protein to the mitochondrion; sequence MAAAAQSRVVRVLSMSRSAITAIATSVCHGPPRRQ. Residue Lys-175 is modified to N6-succinyllysine. N6-acetyllysine is present on residues Lys-189 and Lys-370.

It belongs to the complex I NDUFA9 subunit family. In terms of assembly, complex I is composed of 45 different subunits. This a component of the hydrophobic protein fraction. Interacts with BLOC1S1. Interacts with SLC2A4. Interacts with CLOCK. Interacts with RAB5IF. FAD serves as cofactor. In terms of processing, acetylated on lysine residues. BLOC1S1 is required for acetylation. Acetylated by CLOCK in a circadian manner.

Its subcellular location is the mitochondrion matrix. In terms of biological role, accessory subunit of the mitochondrial membrane respiratory chain NADH dehydrogenase (Complex I), that is believed not to be involved in catalysis. Complex I functions in the transfer of electrons from NADH to the respiratory chain. The immediate electron acceptor for the enzyme is believed to be ubiquinone. The sequence is that of NADH dehydrogenase [ubiquinone] 1 alpha subcomplex subunit 9, mitochondrial (NDUFA9) from Pongo abelii (Sumatran orangutan).